We begin with the raw amino-acid sequence, 1411 residues long: MSLSKYFNPIPDASVTFDGATVQLEESLGAVQNDEESASEFKNVGHLEISDITFRANEGEVVLVLGNPTSALFKGLFHGHKHLKYSPEGSIRFKDNEYKQFASKCPHQIIYNNEQDIHFPYLTVEQTIDFALSCKFHIPKQERIEMRDELLKEFGLSHVKKTYVGNDYVRGVSGGERKRISIIETFIANGSVYLWDNSTKGLDSATALEFLSITQKMAKATRSVNFVKISQASDKIVSKFDKILMLGDSFQVFYGTMEECLTHFHDTLQIKKNPNDCIIEYLTSILNFKFKETSNSIVGLDTPSVVSEENQALNINNETDLHTLWIQSPYYKHWKAITSKTVQECTRKDVNPDDISPIFSIPLKTQLKTCTVRAFERIIGDRNYLISQFVSVVVQSLVIGSLFYNIPLTTIGSFSRGSLTFFSILFFTFLSLADMPASFQRQPVVRKHVQLHFYYNWVETLATNFFDCCSKFILVVIFTIILYFLAHLQYNAARFFIFLLFLSVYNFCMVSLFALTALIAPTLSMANLLAGILLLAIAMYASYVIYMKDMHPWFIWIAYLNPAMFAMEAILSNELFNLKLDCHESIIPRGEYYDNISFSHKACAWQGATLGNDYVRGRDYLKSGLKYTYHHVWRNFGIIIGFLCFFLFCSLLAAEYITPLFTRENLLRWNNYLKRYCPFLNSQKKNNKSAITNNDGVCTPKTPIANFSTSSSSVPSVSHQYDTDYNIKHPDETVNNHTKESVAMETQKHVISWKNINYTIGDKKLINDASGYISSGLTALMGESGAGKTTLLNVLSQRTESGVVTGELLIDGQPLTNIDAFRRSIGFVQQQDVHLELLTVRESLEISCVLRGDGDRDYLGVVSNLLRLPSEKLVADLSPTQRKLLSIGVELVTKPSLLLFLDEPTSGLDAEAALTIVQFLKKLSMQGQAILCTIHQPSKSVISYFDNIYLLKRGGECVYFGSLPNACDYFVAHDRRLTFDREMDNPADFVIDVVGSGSTNIPMDDAEKPTSSKIDEPVSYHKQSDSINWAELWQSSPEKVRVADDLLLLEEEARKSGVDFTTSVWSPPSYMEQIKLITKRQYICTKRDMTYVFAKYALNAGAGLFIGFSFWRTKHNINGLQDAIFLCFMMLCVSSPLINQVQDKALQSKEVYIAREARSNTYHWTVLLIAQTIVELPLAISSSTLFFLCCYFCCGFETSARVAGVFYLNYILFSMYYLSFGLWLLYSAPDLQTAAVFVAFLYSFTASFCGVMQPYSLFPRFWTFMYRVSPYTYFIETFVSLLLHDREVNCSTSEMVPSQPVMGQTCGQFMKPFIDEFGGKLHINNTYTVCAYCMYTVGDDFLAQENMSYHHRWRNFGFEWVFVCFNIAAMFVGFYLTYIKKIWPSVIDGIKKCIPSMRRSKTSHNPNEQSV.

Over 2–388 (SLSKYFNPIP…IGDRNYLISQ (387 aa)) the chain is Cytoplasmic. An ABC transporter 1 domain is found at 31-273 (VQNDEESASE…FHDTLQIKKN (243 aa)). A helical membrane pass occupies residues 389–409 (FVSVVVQSLVIGSLFYNIPLT). Residues 410 to 418 (TIGSFSRGS) lie on the Extracellular side of the membrane. Residues 419–439 (LTFFSILFFTFLSLADMPASF) form a helical membrane-spanning segment. At 440-471 (QRQPVVRKHVQLHFYYNWVETLATNFFDCCSK) the chain is on the cytoplasmic side. A helical membrane pass occupies residues 472 to 492 (FILVVIFTIILYFLAHLQYNA). The Extracellular portion of the chain corresponds to 493–494 (AR). A helical transmembrane segment spans residues 495–515 (FFIFLLFLSVYNFCMVSLFAL). Residues 516-524 (TALIAPTLS) lie on the Cytoplasmic side of the membrane. A helical transmembrane segment spans residues 525 to 545 (MANLLAGILLLAIAMYASYVI). Residues 546 to 636 (YMKDMHPWFI…YTYHHVWRNF (91 aa)) lie on the Extracellular side of the membrane. Asn595 carries N-linked (GlcNAc...) asparagine glycosylation. A helical membrane pass occupies residues 637 to 657 (GIIIGFLCFFLFCSLLAAEYI). At 658–1090 (TPLFTRENLL…QYICTKRDMT (433 aa)) the chain is on the cytoplasmic side. The region spanning 751–979 (ISWKNINYTI…FVAHDRRLTF (229 aa)) is the ABC transporter 2 domain. Position 782 to 789 (782 to 789 (GESGAGKT)) interacts with ATP. A helical membrane pass occupies residues 1091–1111 (YVFAKYALNAGAGLFIGFSFW). The Extracellular portion of the chain corresponds to 1112 to 1117 (RTKHNI). A helical membrane pass occupies residues 1118–1138 (NGLQDAIFLCFMMLCVSSPLI). Residues 1139–1175 (NQVQDKALQSKEVYIAREARSNTYHWTVLLIAQTIVE) are Cytoplasmic-facing. The chain crosses the membrane as a helical span at residues 1176–1196 (LPLAISSSTLFFLCCYFCCGF). At 1197 to 1204 (ETSARVAG) the chain is on the extracellular side. The helical transmembrane segment at 1205 to 1225 (VFYLNYILFSMYYLSFGLWLL) threads the bilayer. Topologically, residues 1226–1230 (YSAPD) are cytoplasmic. The helical transmembrane segment at 1231 to 1251 (LQTAAVFVAFLYSFTASFCGV) threads the bilayer. Over 1252–1355 (MQPYSLFPRF…NMSYHHRWRN (104 aa)) the chain is Extracellular. Residues Asn1289, Asn1324, and Asn1346 are each glycosylated (N-linked (GlcNAc...) asparagine). Residues 1356–1376 (FGFEWVFVCFNIAAMFVGFYL) traverse the membrane as a helical segment. Topologically, residues 1377 to 1411 (TYIKKIWPSVIDGIKKCIPSMRRSKTSHNPNEQSV) are cytoplasmic.

Belongs to the ABC transporter superfamily. ABCG family. PDR (TC 3.A.1.205) subfamily.

The protein localises to the membrane. In terms of biological role, transporter involved in the uptake of sterol. The chain is ATP-dependent permease PDR11 (PDR11) from Saccharomyces cerevisiae (strain ATCC 204508 / S288c) (Baker's yeast).